The chain runs to 781 residues: Homeobox protein SIX4 (781 aa).

Polar residues predominate over residues 1-10; the sequence is MSSSSPTGQI. Disordered stretches follow at residues 1-55 and 270-321; these read MSSS…PLEP and WFKN…GITN. The residue at position 2 (Ser2) is an N-acetylserine. The homeobox DNA-binding region spans 223–282; it reads GEETVYCFKEKSRNALKELYKQNRYPSPAEKRHLAKITGLSLTQVSNWFKNRRQRDRNPS. Basic and acidic residues-rich tracts occupy residues 278-290 and 299-308; these read DRNP…KSES and ESSKGHEDLS. Ser640 carries the post-translational modification Phosphoserine.

Belongs to the SIX/Sine oculis homeobox family. As to quaternary structure, interacts with EYA3; acts cooperatively with EYA3 to transactivate target genes through interaction and nuclear translocation of EYA3 protein.

It localises to the nucleus. The protein resides in the cytoplasm. In terms of biological role, transcriptional regulator which can act as both a transcriptional repressor and activator by binding a DNA sequence on these target genes and is involved in processes like cell differentiation, cell migration and cell survival. Transactivates gene expression by binding a 5'-[CAT]A[CT][CT][CTG]GA[GAT]-3' motif present in the Trex site and a 5'-TCA[AG][AG]TTNC-3' motif present in the MEF3 site of the muscle-specific genes enhancer. Acts cooperatively with EYA proteins to transactivate their target genes through interaction and nuclear translocation of EYA protein. Acts synergistically with SIX1 to regulate target genes involved in formation of various organs, including muscle, kidney, gonad, ganglia, olfactory epithelium and cranial skeleton. Plays a role in several important steps of muscle development. Controls the genesis of hypaxial myogenic progenitors in the dermomyotome by transactivating PAX3 and the delamination and migration of the hypaxial precursors from the ventral lip to the limb buds through the transactivation of PAX3, MET and LBX1. Controls myoblast determination by transactivating MYF5, MYOD1 and MYF6. Controls somitic differentiation in myocyte through MYOG transactivation. Plays a role in synaptogenesis and sarcomere organization by participating in myofiber specialization during embryogenesis by activating fast muscle program in the primary myotome resulting in an up-regulation of fast muscle genes, including ATP2A1, MYL1 and TNNT3. Simultaneously, is also able to activate inhibitors of slow muscle genes, such as SOX6, HRASLS, and HDAC4, thereby restricting the activation of the slow muscle genes. During muscle regeneration, negatively regulates differentiation of muscle satellite cells through down-regulation of MYOG expression. During kidney development regulates the early stages of metanephros development and ureteric bud formation through regulation of GDNF, SALL1, PAX8 and PAX2 expression. Plays a role in gonad development by regulating both testis determination and size determination. In gonadal sex determination, transactivates ZFPM2 by binding a MEF3 consensus sequence, resulting in SRY up-regulation. In gonadal size determination, transactivates NR5A1 by binding a MEF3 consensus sequence resulting in gonadal precursor cell formation regulation. During olfactory development mediates the specification and patterning of olfactory placode through fibroblast growth factor and BMP4 signaling pathways and also regulates epithelial cell proliferation during placode formation. Promotes survival of sensory neurons during early trigeminal gangliogenesis. In the developing dorsal root ganglia, up-regulates SLC12A2 transcription. Regulates early thymus/parathyroid organogenesis through regulation of GCM2 and FOXN1 expression. Forms gustatory papillae during development of the tongue. Also plays a role during embryonic cranial skeleton morphogenesis. The sequence is that of Homeobox protein SIX4 (SIX4) from Homo sapiens (Human).